Reading from the N-terminus, the 449-residue chain is Capsid protein (449 aa).

The segment at 1 to 43 (MARRARRPRGRFYAFRRGRWHNLKRLRRRYKFRHRRRQRYRRR) is DNA-binding. Positions 6 to 47 (RRPRGRFYAFRRGRWHNLKRLRRRYKFRHRRRQRYRRRAFRK) are nuclear localization signals.

This sequence belongs to the gyrovirus capsid protein family. Homomultimer (Potential). Interacts with Rep; this interaction relocates Rep into the nucleus.

It localises to the host nucleus. It is found in the virion. Its function is as follows. Self-assembles to form the virion icosahedral capsid with a T=1 symmetry. This very small capsid (25 nm in diameter) allows the virus to be very stable in the environment and resistant to some disinfectants, including detergents. Essential for the initial attachment to host receptors. After attachment, the virus is endocytosed and traffics to the nucleus. The capsid protein binds and transports the viral genome and Rep across the nuclear envelope. This Chicken anemia virus (isolate USA CIA-1) (CAV) protein is Capsid protein (VP1).